We begin with the raw amino-acid sequence, 225 residues long: Lipid A 4'-phosphatase (225 aa).

6 helical membrane passes run 29 to 49, 51 to 71, 110 to 130, 136 to 156, 160 to 180, and 203 to 223; these read SAFTGKVIWVPMYASILYILL, NFHWKVALCYVVAIALTITFA, FGFPSCHAANSFGLAIFLICL, LSIFIVLWAFTNSYTRLYLGL, GDLVAGAIIGGFGGWLFYFIA, and TEVMIYTGLLTLAGIIIYSIV.

The protein belongs to the lipid A LpxF 4'-phosphatase family.

The protein localises to the cell inner membrane. It participates in bacterial outer membrane biogenesis; LPS lipid A biosynthesis. Its function is as follows. Probably removes the 4'-phosphate group from lipid A. Removal of this phosphate group confers resistance to cationic antimicrobial peptides (CAMPs), inflammation-associated peptides produced by the human host. This LPS modification helps maintain the stability of this commensal bacterium in gut microbiota. The chain is Lipid A 4'-phosphatase from Bacteroides thetaiotaomicron (strain ATCC 29148 / DSM 2079 / JCM 5827 / CCUG 10774 / NCTC 10582 / VPI-5482 / E50).